The chain runs to 220 residues: Ribose-5-phosphate isomerase A (220 aa).

Substrate is bound by residues 25–28, 80–83, and 93–96; these read TGST, DGAD, and KGGG. Catalysis depends on Glu-102, which acts as the Proton acceptor. A substrate-binding site is contributed by Lys-120.

The protein belongs to the ribose 5-phosphate isomerase family. As to quaternary structure, homodimer.

The enzyme catalyses aldehydo-D-ribose 5-phosphate = D-ribulose 5-phosphate. It functions in the pathway carbohydrate degradation; pentose phosphate pathway; D-ribose 5-phosphate from D-ribulose 5-phosphate (non-oxidative stage): step 1/1. Its function is as follows. Catalyzes the reversible conversion of ribose-5-phosphate to ribulose 5-phosphate. The chain is Ribose-5-phosphate isomerase A from Bacillus cereus (strain ATCC 10987 / NRS 248).